The following is an 861-amino-acid chain: MVANKSKATKRKVAAAPQPPTAQDKPATNGRSTKQPEADSDQSASDYYESDEENLLANINNDDGDSSDSEGEGDASDGEVQGLNIESDSDFEEDDQEADGEEEEEDSADDVNSDSSPEEDEGESEEEEEDDDEGDLEFEEDLAEPEKPRAIKEGSKAGKKQAPEVESEEEDDLETKKLLEAAAKEDEKLAALDSVLGPDGEKKTRGVGSFPPERKTGRLKNSDEYAGGDTSDEEDIRNTVGNIPMHWYDEYKHIGYDWDGNRLIKPPKMDTIDEFLKRMEDPNFWRTVKDPQTGQNVVLSDEDVGLIKRIMAGRNPDQQYNDYEPWIEWFTSEVEKMPIRNIPDHKRSFLPSKSEKQKIGRLVHALKMGWVKTRAETERLAAAAKGPKFYMVWDSDHGKEDIRRIHDHVVAPKRPLPGHAESYNPPPEYLFNERELAEWNSHEEEPWRRKLHYIPQKFNSLREVPYYAQYVRERFLRCLDLYLCPRGKRTRVTVGPEYLIPKLPSPKDLQPFPTLQNLVYRGHTDMIRTISIEPKGEYLVTGSDDKTIKIWEVSTARCIKTIPTGDVVRSVAWCPNVKISLIAVASGKRTLLINPHVGDCLLSKKTDDLLAEAPKHEVVDNERISTAVQWVDVAEEEQKAGVRIVINHFREIKQVTWHGRGDYFATVMPEAQNRSVLIHQLSKRRSQFPFSKSKGLIQCVLFHPVKPCLFVATQRHIRVYDLVKQELLKKLFPSCKWISSMAIHPKGDNLLVATYEKKMMWFDLDLSTRPYQQLKLHFSAIRNVAFHQRYPLFASASDDRSVIVSHGMVYNDLMQNALIVPLRRLENHERVNDFGAFDVVFHPTQPWLFSSGADNTVRLYT.

Residues 1-237 (MVANKSKATK…GDTSDEEDIR (237 aa)) are disordered. Positions 29–45 (NGRSTKQPEADSDQSAS) are enriched in polar residues. 2 stretches are compositionally biased toward acidic residues: residues 62 to 77 (DDGDSSDSEGEGDASD) and 87 to 143 (SDSD…EDLA). Basic and acidic residues-rich tracts occupy residues 144-156 (EPEKPRAIKEGSK), 174-190 (ETKKLLEAAAKEDEKLA), and 212-223 (PERKTGRLKNSD). WD repeat units lie at residues 522–561 (GHTDMIRTISIEPKGEYLVTGSDDKTIKIWEVSTARCIKT), 563–603 (PTGD…CLLS), 692–730 (KSKGLIQCVLFHPVKPCLFVATQRHIRVYDLVKQELLKK), 733–772 (PSCKWISSMAIHPKGDNLLVATYEKKMMWFDLDLSTRPYQ), 776–815 (LHFSAIRNVAFHQRYPLFASASDDRSVIVSHGMVYNDLMQ), and 831–861 (VNDFGAFDVVFHPTQPWLFSSGADNTVRLYT).

This sequence belongs to the WD repeat BOP1/ERB1 family.

Its subcellular location is the nucleus. The protein localises to the nucleolus. The protein resides in the nucleoplasm. Required for maturation of ribosomal RNAs and formation of the large ribosomal subunit. This is Ribosome biogenesis protein BOP1 homolog from Culex quinquefasciatus (Southern house mosquito).